Here is a 259-residue protein sequence, read N- to C-terminus: ATP synthase subunit b 2 (259 aa).

A helical membrane pass occupies residues 5–27 (WFTVSAQAINFLILVALLKRFLY).

This sequence belongs to the ATPase B chain family. In terms of assembly, F-type ATPases have 2 components, F(1) - the catalytic core - and F(0) - the membrane proton channel. F(1) has five subunits: alpha(3), beta(3), gamma(1), delta(1), epsilon(1). F(0) has three main subunits: a(1), b(2) and c(10-14). The alpha and beta chains form an alternating ring which encloses part of the gamma chain. F(1) is attached to F(0) by a central stalk formed by the gamma and epsilon chains, while a peripheral stalk is formed by the delta and b chains.

The protein localises to the cell inner membrane. F(1)F(0) ATP synthase produces ATP from ADP in the presence of a proton or sodium gradient. F-type ATPases consist of two structural domains, F(1) containing the extramembraneous catalytic core and F(0) containing the membrane proton channel, linked together by a central stalk and a peripheral stalk. During catalysis, ATP synthesis in the catalytic domain of F(1) is coupled via a rotary mechanism of the central stalk subunits to proton translocation. Functionally, component of the F(0) channel, it forms part of the peripheral stalk, linking F(1) to F(0). This Syntrophotalea carbinolica (strain DSM 2380 / NBRC 103641 / GraBd1) (Pelobacter carbinolicus) protein is ATP synthase subunit b 2.